Here is a 261-residue protein sequence, read N- to C-terminus: Cytochrome c oxidase subunit 2 (261 aa).

Residues 1 to 34 (MSFTGIFHFFTNSPCDAAEPWQLGSQDAATPMMQ) lie on the Mitochondrial intermembrane side of the membrane. The helical transmembrane segment at 35-55 (GIIDLHHDIFFFLILILVFVS) threads the bilayer. Over 56 to 87 (RILVRALWHFHSKKNPIPQRIVHGTTIEILRT) the chain is Mitochondrial matrix. The helical transmembrane segment at 88 to 108 (IFPSIIPMFIAIPSFALLYSM) threads the bilayer. Over 109–261 (DEVVVDPAMT…NQLIPQTGEA (153 aa)) the chain is Mitochondrial intermembrane. H188, C223, E225, C227, and H231 together coordinate Cu cation. E225 serves as a coordination point for Mg(2+).

Belongs to the cytochrome c oxidase subunit 2 family. As to quaternary structure, component of the cytochrome c oxidase (complex IV, CIV), a multisubunit enzyme composed of a catalytic core of 3 subunits and several supernumerary subunits. The complex exists as a monomer or a dimer and forms supercomplexes (SCs) in the inner mitochondrial membrane with ubiquinol-cytochrome c oxidoreductase (cytochrome b-c1 complex, complex III, CIII). Requires Cu cation as cofactor.

The protein localises to the mitochondrion inner membrane. The enzyme catalyses 4 Fe(II)-[cytochrome c] + O2 + 8 H(+)(in) = 4 Fe(III)-[cytochrome c] + 2 H2O + 4 H(+)(out). In terms of biological role, component of the cytochrome c oxidase, the last enzyme in the mitochondrial electron transport chain which drives oxidative phosphorylation. The respiratory chain contains 3 multisubunit complexes succinate dehydrogenase (complex II, CII), ubiquinol-cytochrome c oxidoreductase (cytochrome b-c1 complex, complex III, CIII) and cytochrome c oxidase (complex IV, CIV), that cooperate to transfer electrons derived from NADH and succinate to molecular oxygen, creating an electrochemical gradient over the inner membrane that drives transmembrane transport and the ATP synthase. Cytochrome c oxidase is the component of the respiratory chain that catalyzes the reduction of oxygen to water. Electrons originating from reduced cytochrome c in the intermembrane space (IMS) are transferred via the dinuclear copper A center (CU(A)) of subunit 2 and heme A of subunit 1 to the active site in subunit 1, a binuclear center (BNC) formed by heme A3 and copper B (CU(B)). The BNC reduces molecular oxygen to 2 water molecules using 4 electrons from cytochrome c in the IMS and 4 protons from the mitochondrial matrix. The polypeptide is Cytochrome c oxidase subunit 2 (COX2) (Daucus carota (Wild carrot)).